A 745-amino-acid chain; its full sequence is Phosphoribosylformylglycinamidine synthase subunit PurL (745 aa).

The active site involves His54. ATP contacts are provided by Tyr57 and Lys96. Residue Glu98 participates in Mg(2+) binding. Residues 99–102 and Arg121 contribute to the substrate site; that span reads SHNH. His100 (proton acceptor) is an active-site residue. Residue Asp122 participates in Mg(2+) binding. Gln250 contacts substrate. Position 278 (Asp278) interacts with Mg(2+). Residue 322–324 coordinates substrate; the sequence is ESQ. ATP-binding residues include Asp503 and Gly540. Residue Asn541 participates in Mg(2+) binding. Ser543 contacts substrate.

The protein belongs to the FGAMS family. Monomer. Part of the FGAM synthase complex composed of 1 PurL, 1 PurQ and 2 PurS subunits.

Its subcellular location is the cytoplasm. The enzyme catalyses N(2)-formyl-N(1)-(5-phospho-beta-D-ribosyl)glycinamide + L-glutamine + ATP + H2O = 2-formamido-N(1)-(5-O-phospho-beta-D-ribosyl)acetamidine + L-glutamate + ADP + phosphate + H(+). The protein operates within purine metabolism; IMP biosynthesis via de novo pathway; 5-amino-1-(5-phospho-D-ribosyl)imidazole from N(2)-formyl-N(1)-(5-phospho-D-ribosyl)glycinamide: step 1/2. In terms of biological role, part of the phosphoribosylformylglycinamidine synthase complex involved in the purines biosynthetic pathway. Catalyzes the ATP-dependent conversion of formylglycinamide ribonucleotide (FGAR) and glutamine to yield formylglycinamidine ribonucleotide (FGAM) and glutamate. The FGAM synthase complex is composed of three subunits. PurQ produces an ammonia molecule by converting glutamine to glutamate. PurL transfers the ammonia molecule to FGAR to form FGAM in an ATP-dependent manner. PurS interacts with PurQ and PurL and is thought to assist in the transfer of the ammonia molecule from PurQ to PurL. This chain is Phosphoribosylformylglycinamidine synthase subunit PurL, found in Helicobacter hepaticus (strain ATCC 51449 / 3B1).